The chain runs to 484 residues: tRNA nucleotidyltransferase cca2 (484 aa).

The short motif at 122–124 (RAE) is the B/A element element. The segment at 125–142 (SYDDKSRIPSVTPGTVET) is flexible loop. The ERhxxExxxhh motif signature appears at 234-244 (ERVGEEIEKML).

It belongs to the tRNA nucleotidyltransferase/poly(A) polymerase family.

Its subcellular location is the cytoplasm. The catalysed reaction is a tRNA with a 3' CC end + ATP = a tRNA with a 3' CCA end + diphosphate. In terms of biological role, tRNA nucleotidyltransferase involved in the synthesis of the tRNA CCA terminus. In contrast to what is usually observed in eukaryotes for which one enzyme synthesizes the whole tRNA CCA terminus, in S.pombe, cca1 specifically adds two cytidine residues to a tRNA substrate lacking this sequence while cca2 specifically adds the terminal adenosine residue thereby completing the CCA sequence. The polypeptide is tRNA nucleotidyltransferase cca2 (Schizosaccharomyces pombe (strain 972 / ATCC 24843) (Fission yeast)).